We begin with the raw amino-acid sequence, 37 residues long: Potassium channel toxin alpha-KTx 3.13 (37 aa).

3 cysteine pairs are disulfide-bonded: cysteine 7–cysteine 27, cysteine 13–cysteine 32, and cysteine 17–cysteine 34. At lysine 37 the chain carries Lysine amide.

The protein belongs to the short scorpion toxin superfamily. Potassium channel inhibitor family. Alpha-KTx 03 subfamily. In terms of tissue distribution, expressed by the venom gland.

Its subcellular location is the secreted. In terms of biological role, blocks voltage-gated potassium channels Kv1.1/KCNA1 (IC(50)=203.15 pM), Kv1.2/KCNA2 (IC(50)=8.92 nM) from rat and human Kv1.3 KCNA3/KCNA3 (IC(50)=171 pM) potently. At 2 uM, also blocks Shaker IR and has a moderate effect on rat Kv1.6/KCNA6. The sequence is that of Potassium channel toxin alpha-KTx 3.13 from Mesobuthus eupeus (Lesser Asian scorpion).